Reading from the N-terminus, the 268-residue chain is 3-deoxy-manno-octulosonate cytidylyltransferase (268 aa).

It belongs to the KdsB family.

It localises to the cytoplasm. The enzyme catalyses 3-deoxy-alpha-D-manno-oct-2-ulosonate + CTP = CMP-3-deoxy-beta-D-manno-octulosonate + diphosphate. It functions in the pathway nucleotide-sugar biosynthesis; CMP-3-deoxy-D-manno-octulosonate biosynthesis; CMP-3-deoxy-D-manno-octulosonate from 3-deoxy-D-manno-octulosonate and CTP: step 1/1. Its pathway is bacterial outer membrane biogenesis; lipopolysaccharide biosynthesis. Functionally, activates KDO (a required 8-carbon sugar) for incorporation into bacterial lipopolysaccharide in Gram-negative bacteria. This is 3-deoxy-manno-octulosonate cytidylyltransferase from Psychrobacter cryohalolentis (strain ATCC BAA-1226 / DSM 17306 / VKM B-2378 / K5).